We begin with the raw amino-acid sequence, 292 residues long: MDKVKIALQYMLPKHLLSRLVGKLAASEAGALTTAAIKWFIKQYKIDMSEAAQSEPEAYKSFNDFFTRALKPGIRPINTATNIMVHPVDGAVSQLGPIKDGRIFQAKGHHYSSLTLLGDQAEDAKRFEGGDFATIYLAPKDYHRIHMPIKGTLSKMTYVPGELFSVNPLTARHVPGLFARNERVVAIFETELGPLAMVLVGATIVASIETVWAGTITPPTGKQVFTWEYPTVGPDAITLDKGEEMGRFKLGSTVVMLFAKDAIDTFAEGVEPEAVTRMGQAFANLKNQASAD.

Catalysis depends on charge relay system; for autoendoproteolytic cleavage activity residues aspartate 89, histidine 146, and serine 252. The active-site Schiff-base intermediate with substrate; via pyruvic acid; for decarboxylase activity is the serine 252. Serine 252 is modified (pyruvic acid (Ser); by autocatalysis).

Belongs to the phosphatidylserine decarboxylase family. PSD-B subfamily. Prokaryotic type I sub-subfamily. In terms of assembly, heterodimer of a large membrane-associated beta subunit and a small pyruvoyl-containing alpha subunit. Pyruvate is required as a cofactor. Post-translationally, is synthesized initially as an inactive proenzyme. Formation of the active enzyme involves a self-maturation process in which the active site pyruvoyl group is generated from an internal serine residue via an autocatalytic post-translational modification. Two non-identical subunits are generated from the proenzyme in this reaction, and the pyruvate is formed at the N-terminus of the alpha chain, which is derived from the carboxyl end of the proenzyme. The autoendoproteolytic cleavage occurs by a canonical serine protease mechanism, in which the side chain hydroxyl group of the serine supplies its oxygen atom to form the C-terminus of the beta chain, while the remainder of the serine residue undergoes an oxidative deamination to produce ammonia and the pyruvoyl prosthetic group on the alpha chain. During this reaction, the Ser that is part of the protease active site of the proenzyme becomes the pyruvoyl prosthetic group, which constitutes an essential element of the active site of the mature decarboxylase.

It localises to the cell membrane. It carries out the reaction a 1,2-diacyl-sn-glycero-3-phospho-L-serine + H(+) = a 1,2-diacyl-sn-glycero-3-phosphoethanolamine + CO2. The protein operates within phospholipid metabolism; phosphatidylethanolamine biosynthesis; phosphatidylethanolamine from CDP-diacylglycerol: step 2/2. Catalyzes the formation of phosphatidylethanolamine (PtdEtn) from phosphatidylserine (PtdSer). In Shewanella sp. (strain ANA-3), this protein is Phosphatidylserine decarboxylase proenzyme.